A 262-amino-acid polypeptide reads, in one-letter code: GTP cyclohydrolase 1 type 2 homolog (262 aa).

Positions 65, 102, 222, and 225 each coordinate a divalent metal cation.

This sequence belongs to the GTP cyclohydrolase I type 2/NIF3 family. As to quaternary structure, homohexamer.

This chain is GTP cyclohydrolase 1 type 2 homolog, found in Streptococcus pyogenes serotype M3 (strain ATCC BAA-595 / MGAS315).